We begin with the raw amino-acid sequence, 725 residues long: MSADSKVWAHASADTWTTAQGISTYDLDTSSIKREKIDCHEQFNDGYGPPPGTASTDAVSYAADPTAYFNLYTNMGAAPTTTPMMHHEMGEAMKRDKEAIYAHPLYPLLVVLFEKCELATSTPRETSRDGTTSSDVCSSASFKDDLNEFVKHTQENADKQYYQPNPQLDQIMLQSIQMLRFHLLELEKVHELCDNFCNRYVTCLKGKMPLDIVGDERASSSQPPMSPGSMGHHGHSGSPSMGGAGAATPMHYPPPYEPQSVPLPENVLGGGHPLEMFPGSSMAYAMAGMAAAAASSSSSQPQPGDHPLANGGTLHSTAGASQTLLPIAVSSPSTCSSGGLRQDSTPLSGETPMANGNSMDSISEAERIRRRFYMCVIVSAGPSSSSLHQHHLHHPHHFPHHQLQPPAHHQDFLLPPPPQNIIEQSLHCAGVSMLDASLIPPSSSSSASEYHGDMMSHMYSHHDVYHHQDMTYTDYGDYGTPDVVMMSSSDVKMEDAASVSSSKSGGKKQQPGTPNGRVGKSRGRDEFSVCGSNEDGRDSVLSDSANGSQNGKRKVPKVFSKEAITKFRAWLFQNLAHPYPSEEQKKQLAKETGLTILQVNNWFINARRRIVQPMIDQNNRAGRTPHMNVCKNRRRNRSEQSPGPSPDSESDSGANYSPDPTSLAAATAMHYPGAELYMQRTMNYGGFQPFPNPAMQFMNPMMGFPVAPAVDAISQQWIDLSAPHE.

The MEIS N-terminal domain maps to S133–A218. Disordered regions lie at residues G214 to P258, S295 to T317, V329 to M359, S386 to Q419, V491 to V555, and I615 to T661. Positions S219–P239 are enriched in low complexity. Over residues H388 to H400 the composition is skewed to basic residues. Positions S498 to K508 are enriched in low complexity. Residues L541–N550 are compositionally biased toward polar residues. Positions K552–M614 form a DNA-binding region, homeobox; TALE-type.

The protein belongs to the TALE/MEIS homeobox family.

The protein resides in the nucleus. Acts redundantly with ceh-20 and ceh-40 to perform overlapping roles during embryogenesis. Required for postembryonic development of the ectoderm, including the Q, V and P cell lineages, playing a crucial role in ensuring that these cells and their descendants undergo their invariant patterns of cell division, migration, fusion and morphogenesis. Has a role in the mig-13 pathway to promote anterior migration of neuroblasts in the Q lineage. Required for multiple roles in regulating vulva development. The chain is Homeobox protein unc-62 (unc-62) from Caenorhabditis briggsae.